A 471-amino-acid chain; its full sequence is Alpha-galactosidase (471 aa).

Residues 1-18 (MFNLNFFNYTCHCEWCFW) form the signal peptide. A disulfide bridge connects residues C42 and C74. The N-linked (GlcNAc...) asparagine glycan is linked to N43. Residues D72 and D73 each coordinate substrate. An N-linked (GlcNAc...) asparagine glycan is attached at N105. C121 and C151 form a disulfide bridge. Position 147 (K147) interacts with substrate. D149 serves as the catalytic Nucleophile. N175 carries an N-linked (GlcNAc...) asparagine glycan. Position 205 (R205) interacts with substrate. D209 acts as the Proton donor in catalysis. Cystine bridges form between C221–C237 and C223–C230. Q251 contacts substrate. 6 N-linked (GlcNAc...) asparagine glycosylation sites follow: N270, N370, N403, N417, N422, and N454.

This sequence belongs to the glycosyl hydrolase 27 family. As to quaternary structure, homotetramer.

It is found in the secreted. The enzyme catalyses Hydrolysis of terminal, non-reducing alpha-D-galactose residues in alpha-D-galactosides, including galactose oligosaccharides, galactomannans and galactolipids.. The protein is Alpha-galactosidase (MEL) of Saccharomyces paradoxus (Yeast).